The following is a 612-amino-acid chain: MDDHKPIDTPDGPAVDTPGIGAHRYEAPPTDRPITEAEAARAAGLAHNEHLKIASRYLRGGLADGLLKHATGAISEDDGQLVKFHGMYMQDDRDIRAERTKKKLEKAFSFMIRLRIAGGVVTPKQWLILDNIATTYAGNALRATTRQTFQYHGVIKSNLKRTMAAIDSALLDTIAACGDVNRNVMAATNPAQAGAHKAALQLAKDISDTLLPKTGAWREIWLDGERVVGGEDEAEVEPVYGKTYLPRKFKTVVAVPPSNEVDIFAHDLGFIAILDKKNRVTGWNVTVGGGMGMTHGETDTFPRTADVLGFVKPEDALKAAEAVMTVQRDWGNRKNRKNARLKYTIERFGLDAFRAEVEKRIGKKLEAPKPFTFENNGDRYGWVEGEDGRHHLTLYVPSGRIKDIDGGPQFLSGLRRIAEVHEGDFRLTGNQNVIIANVPAAKRAEIDALVDEYGLTRGASAIRRNSIACVALPTCGLALAESERYLPDLLTELEESLARHGLQDEPITIRSTGCPNGCARPFISEIGLVGRGPERYHLYLGAAFDGSRLSKLYREDVLASEIKDTLDPLFAAYAKDRQPGEHFGDFVIRAGFVAKTSNGPDFHERTGPLRAA.

The disordered stretch occupies residues 1-32 (MDDHKPIDTPDGPAVDTPGIGAHRYEAPPTDR). [4Fe-4S] cluster is bound by residues cysteine 469, cysteine 475, cysteine 514, and cysteine 518. Cysteine 518 provides a ligand contact to siroheme.

Belongs to the nitrite and sulfite reductase 4Fe-4S domain family. As to quaternary structure, alpha(8)-beta(8). The alpha component is a flavoprotein, the beta component is a hemoprotein. Siroheme is required as a cofactor. [4Fe-4S] cluster serves as cofactor.

It carries out the reaction hydrogen sulfide + 3 NADP(+) + 3 H2O = sulfite + 3 NADPH + 4 H(+). The protein operates within sulfur metabolism; hydrogen sulfide biosynthesis; hydrogen sulfide from sulfite (NADPH route): step 1/1. Its function is as follows. Component of the sulfite reductase complex that catalyzes the 6-electron reduction of sulfite to sulfide. This is one of several activities required for the biosynthesis of L-cysteine from sulfate. The chain is Sulfite reductase [NADPH] hemoprotein beta-component from Methylorubrum populi (strain ATCC BAA-705 / NCIMB 13946 / BJ001) (Methylobacterium populi).